A 93-amino-acid chain; its full sequence is Neurophysin 1 (93 aa).

Intrachain disulfides connect C10–C54, C13–C27, C21–C44, C28–C34, C61–C74, C68–C86, and C75–C80.

It belongs to the vasopressin/oxytocin family.

It localises to the secreted. Neurophysin 1 specifically binds oxytocin. This is Neurophysin 1 from Anser anser anser (Western greylag goose).